The following is a 183-amino-acid chain: Protein P7 (183 aa).

It is found in the host nucleus. In terms of biological role, may play a role in inhibition of the host immune system by counteracting the type I interferon response. The protein is Protein P7 of Gadus morhua (Atlantic cod).